A 298-amino-acid chain; its full sequence is Mitochondrial distribution and morphology protein 12 (298 aa).

Positions 1 to 298 constitute an SMP-LTD domain; the sequence is MSIELDWTGL…VYPHFYTLYL (298 aa). The interval 118-142 is disordered; sequence SEHEESLSRWSDTESETGTCDSSSL. The segment covering 133–142 has biased composition (polar residues); the sequence is ETGTCDSSSL.

This sequence belongs to the MDM12 family. As to quaternary structure, component of the ER-mitochondria encounter structure (ERMES) or MDM complex, composed of MMM1, MDM10, MDM12 and MDM34. An MMM1 homodimer associates with one molecule of MDM12 on each side in a pairwise head-to-tail manner, and the SMP-LTD domains of MMM1 and MDM12 generate a continuous hydrophobic tunnel for phospholipid trafficking.

It is found in the mitochondrion outer membrane. Its subcellular location is the endoplasmic reticulum membrane. Component of the ERMES/MDM complex, which serves as a molecular tether to connect the endoplasmic reticulum (ER) and mitochondria. Components of this complex are involved in the control of mitochondrial shape and protein biogenesis, and function in nonvesicular lipid trafficking between the ER and mitochondria. MDM12 is required for the interaction of the ER-resident membrane protein MMM1 and the outer mitochondrial membrane-resident beta-barrel protein MDM10. The MDM12-MMM1 subcomplex functions in the major beta-barrel assembly pathway that is responsible for biogenesis of all mitochondrial outer membrane beta-barrel proteins, and acts in a late step after the SAM complex. The MDM10-MDM12-MMM1 subcomplex further acts in the TOM40-specific pathway after the action of the MDM12-MMM1 complex. Essential for establishing and maintaining the structure of mitochondria and maintenance of mtDNA nucleoids. The polypeptide is Mitochondrial distribution and morphology protein 12 (Malassezia globosa (strain ATCC MYA-4612 / CBS 7966) (Dandruff-associated fungus)).